We begin with the raw amino-acid sequence, 185 residues long: Dioxygenase easH (185 aa).

Residues His17, Asp19, and His93 each contribute to the Fe cation site.

This sequence belongs to the PhyH family. As to quaternary structure, homodimer. Fe cation is required as a cofactor.

Its pathway is alkaloid biosynthesis; ergot alkaloid biosynthesis. In terms of biological role, dioxygenase; part of the gene cluster that mediates the biosynthesis of fungal ergot alkaloid ergovaline, the predominant ergopeptine product in E.festucae var. lolii. DmaW catalyzes the first step of ergot alkaloid biosynthesis by condensing dimethylallyl diphosphate (DMAP) and tryptophan to form 4-dimethylallyl-L-tryptophan. The second step is catalyzed by the methyltransferase easF that methylates 4-dimethylallyl-L-tryptophan in the presence of S-adenosyl-L-methionine, resulting in the formation of 4-dimethylallyl-L-abrine. The catalase easC and the FAD-dependent oxidoreductase easE then transform 4-dimethylallyl-L-abrine to chanoclavine-I which is further oxidized by easD in the presence of NAD(+), resulting in the formation of chanoclavine-I aldehyde. Agroclavine dehydrogenase easG then mediates the conversion of chanoclavine-I aldehyde to agroclavine via a non-enzymatic adduct reaction: the substrate is an iminium intermediate that is formed spontaneously from chanoclavine-I aldehyde in the presence of glutathione. The presence of easA is not required to complete this reaction. Further conversion of agroclavine to paspalic acid is a two-step process involving oxidation of agroclavine to elymoclavine and of elymoclavine to paspalic acid, the second step being performed by the elymoclavine oxidase cloA. Paspalic acid is then further converted to D-lysergic acid. Ergovaline is assembled from D-lysergic acid and three different amino acids by the D-lysergyl-peptide-synthetase composed of a monomudular (lpsB) and a trimodular (lpsA) nonribosomal peptide synthetase subunit. This Epichloe festucae var. lolii (Neotyphodium lolii) protein is Dioxygenase easH.